The chain runs to 258 residues: NAD(P)H-hydrate epimerase (258 aa).

The YjeF N-terminal domain occupies 15-244 (AFQLDQELMS…RIAKEYGIED (230 aa)). 75–79 (NNGGD) is a (6S)-NADPHX binding site. K(+)-binding residues include N76 and D145. Residues 149 to 155 (GFSFKPP) and D181 contribute to the (6S)-NADPHX site. Residue S184 coordinates K(+).

The protein belongs to the NnrE/AIBP family. It depends on K(+) as a cofactor.

The protein resides in the cytoplasm. The protein localises to the mitochondrion. The catalysed reaction is (6R)-NADHX = (6S)-NADHX. It carries out the reaction (6R)-NADPHX = (6S)-NADPHX. Functionally, catalyzes the epimerization of the S- and R-forms of NAD(P)HX, a damaged form of NAD(P)H that is a result of enzymatic or heat-dependent hydration. This is a prerequisite for the S-specific NAD(P)H-hydrate dehydratase to allow the repair of both epimers of NAD(P)HX. This chain is NAD(P)H-hydrate epimerase, found in Candida albicans (strain WO-1) (Yeast).